The primary structure comprises 205 residues: Holliday junction branch migration complex subunit RuvA (205 aa).

Positions 1 to 64 (MIGKLKGLID…EDQIKLFGFR (64 aa)) are domain I. The tract at residues 65–143 (SDLEREWFRL…AFASVDPAVV (79 aa)) is domain II. The segment at 144-153 (ALSGALDERS) is flexible linker. The tract at residues 153–205 (SAPRPVTDAISALVNLGYGQPQAAAAIASASRSAGEGAETAQLIKLGLKELSK) is domain III.

This sequence belongs to the RuvA family. In terms of assembly, homotetramer. Forms an RuvA(8)-RuvB(12)-Holliday junction (HJ) complex. HJ DNA is sandwiched between 2 RuvA tetramers; dsDNA enters through RuvA and exits via RuvB. An RuvB hexamer assembles on each DNA strand where it exits the tetramer. Each RuvB hexamer is contacted by two RuvA subunits (via domain III) on 2 adjacent RuvB subunits; this complex drives branch migration. In the full resolvosome a probable DNA-RuvA(4)-RuvB(12)-RuvC(2) complex forms which resolves the HJ.

It is found in the cytoplasm. The RuvA-RuvB-RuvC complex processes Holliday junction (HJ) DNA during genetic recombination and DNA repair, while the RuvA-RuvB complex plays an important role in the rescue of blocked DNA replication forks via replication fork reversal (RFR). RuvA specifically binds to HJ cruciform DNA, conferring on it an open structure. The RuvB hexamer acts as an ATP-dependent pump, pulling dsDNA into and through the RuvAB complex. HJ branch migration allows RuvC to scan DNA until it finds its consensus sequence, where it cleaves and resolves the cruciform DNA. The sequence is that of Holliday junction branch migration complex subunit RuvA from Rhodopseudomonas palustris (strain BisB18).